The following is a 375-amino-acid chain: Pulmonary surfactant-associated protein D (375 aa).

The signal sequence occupies residues 1 to 20; it reads MLLFLLSALVLLTQPLGYLE. 2 positions are modified to S-nitrosocysteine: Cys35 and Cys40. The segment at 45–221 is disordered; that stretch reads SGLPGRDGRD…DKGAKGESGL (177 aa). The Collagen-like domain occupies 46–222; that stretch reads GLPGRDGRDG…KGAKGESGLP (177 aa). A compositionally biased stretch (basic and acidic residues) spans 50–65; it reads RDGRDGREGPRGEKGD. Residues 66–86 are compositionally biased toward low complexity; it reads PGLPGAAGQAGMPGQAGPVGP. At Pro78 the chain carries 4-hydroxyproline. A 5-hydroxylysine modification is found at Lys87. A glycan (N-linked (GlcNAc...) asparagine) is linked at Asn90. 4-hydroxyproline is present on Pro96. Lys99 is modified (5-hydroxylysine). The span at 105 to 114 shows a compositional bias: pro residues; sequence SGPPGPPGVP. 2 stretches are compositionally biased toward low complexity: residues 116–132 and 138–150; these read PAGR…IGPQ and KGEA…VGAP. 2 positions are modified to 4-hydroxyproline: Pro171 and Pro177. Residues 204-216 are compositionally biased toward basic and acidic residues; it reads KGDKGIPGDKGAK. Residues 223–252 are a coiled coil; that stretch reads DVASLRQQVEALQGQVQHLQAAFSQYKKVE. The 116-residue stretch at 260 to 375 folds into the C-type lectin domain; that stretch reads VGEKIFKTAG…GEKRLVVCEF (116 aa). 2 cysteine pairs are disulfide-bonded: Cys281–Cys373 and Cys351–Cys365.

This sequence belongs to the SFTPD family. Oligomeric complex of 4 set of homotrimers. The N-terminus is blocked. In terms of processing, hydroxylation on proline residues within the sequence motif, GXPG, is most likely to be 4-hydroxy as this fits the requirement for 4-hydroxylation in vertebrates. Post-translationally, S-nitrosylation at Cys-35 and Cys-40 alters the quaternary structure which results in a pro-inflammatory chemoattractive signaling activity with macrophages. Expressed in lung, brain, pancreas and adipose tissue (mainly mature adipocytes).

It is found in the secreted. The protein resides in the extracellular space. It localises to the extracellular matrix. Its subcellular location is the surface film. Functionally, contributes to the lung's defense against inhaled microorganisms, organic antigens and toxins. Interacts with compounds such as bacterial lipopolysaccharides, oligosaccharides and fatty acids and modulates leukocyte action in immune response. May participate in the extracellular reorganization or turnover of pulmonary surfactant. Binds strongly maltose residues and to a lesser extent other alpha-glucosyl moieties. In Homo sapiens (Human), this protein is Pulmonary surfactant-associated protein D (SFTPD).